The following is a 305-amino-acid chain: Hepatitis A virus cellular receptor 1 homolog (305 aa).

The signal sequence occupies residues 1–21; it reads MNQIQVFISGLILLLPGAVDS. The Ig-like V-type domain occupies 22-122; that stretch reads YVEVKGVVGH…PGWFNDQKVT (101 aa). At 22–237 the chain is on the extracellular side; that stretch reads YVEVKGVVGH…GKPQKNPTKG (216 aa). 3 cysteine pairs are disulfide-bonded: Cys37–Cys108, Cys49–Cys60, and Cys55–Cys107. Positions 129 to 185 are disordered; sequence PEIPTRPPTRPTTTRPTATGRPTTISTRSTHVPTSIRVSTSTPPTSTHTWTHKPEPT. 2 stretches are compositionally biased toward low complexity: residues 139–152 and 161–177; these read PTTT…RPTT and PTSI…STHT. Asn208 carries N-linked (GlcNAc...) asparagine glycosylation. A helical membrane pass occupies residues 238–258; it reads FYVGICIAALLLLLLVSTVAI. Residues 259–305 lie on the Cytoplasmic side of the membrane; that stretch reads TRYILMKRKSASLSVVAFRVSKIEALQNAAVVHSRAEDNIYIVEDRP.

Belongs to the immunoglobulin superfamily. TIM family. In terms of assembly, interacts with STAM. Interacts with SELPLG. Expressed by stimulated T-cells. Expressed during primary antigen stimulation. Expressed at higher levels on B rather than T-cells, both constitutively and after activation.

It localises to the cell membrane. Functionally, phosphatidylserine receptor that plays an important functional role in regulatory B-cells homeostasis including generation, expansion and suppressor functions. As P-selectin/SELPLG ligand, plays a specialized role in activated but not naive T-cell trafficking during inflammatory responses. Controls thereby T-cell accumulation in the inflamed central nervous system (CNS) and the induction of autoimmune disease. Also regulates expression of various anti-inflammatory cytokines and co-inhibitory ligands including IL10. Acts as a regulator of T-cell proliferation. May play a role in kidney injury and repair. The chain is Hepatitis A virus cellular receptor 1 homolog (Havcr1) from Mus musculus (Mouse).